Consider the following 346-residue polypeptide: 4-hydroxy-2-oxovalerate aldolase 2 (346 aa).

The Pyruvate carboxyltransferase domain maps to 8–260; it reads VTVHDMTLRD…ETGVDVFKIQ (253 aa). 16–17 provides a ligand contact to substrate; it reads RD. D17 provides a ligand contact to Mn(2+). The Proton acceptor role is filled by H20. S170 and H199 together coordinate substrate. H199 and H201 together coordinate Mn(2+). Position 290 (Y290) interacts with substrate.

It belongs to the 4-hydroxy-2-oxovalerate aldolase family.

The catalysed reaction is (S)-4-hydroxy-2-oxopentanoate = acetaldehyde + pyruvate. The polypeptide is 4-hydroxy-2-oxovalerate aldolase 2 (bphX3) (Metapseudomonas furukawaii (Pseudomonas furukawaii)).